A 304-amino-acid chain; its full sequence is Pyridoxal 5'-phosphate synthase subunit PdxS (304 aa).

Asp-34 is a binding site for D-ribose 5-phosphate. Lys-91 acts as the Schiff-base intermediate with D-ribose 5-phosphate in catalysis. Gly-163 is a binding site for D-ribose 5-phosphate. Arg-175 lines the D-glyceraldehyde 3-phosphate pocket. D-ribose 5-phosphate contacts are provided by residues Gly-224 and 245-246; that span reads GS.

It belongs to the PdxS/SNZ family. In the presence of PdxT, forms a dodecamer of heterodimers.

The enzyme catalyses aldehydo-D-ribose 5-phosphate + D-glyceraldehyde 3-phosphate + L-glutamine = pyridoxal 5'-phosphate + L-glutamate + phosphate + 3 H2O + H(+). Its pathway is cofactor biosynthesis; pyridoxal 5'-phosphate biosynthesis. Catalyzes the formation of pyridoxal 5'-phosphate from ribose 5-phosphate (RBP), glyceraldehyde 3-phosphate (G3P) and ammonia. The ammonia is provided by the PdxT subunit. Can also use ribulose 5-phosphate and dihydroxyacetone phosphate as substrates, resulting from enzyme-catalyzed isomerization of RBP and G3P, respectively. This Streptomyces avermitilis (strain ATCC 31267 / DSM 46492 / JCM 5070 / NBRC 14893 / NCIMB 12804 / NRRL 8165 / MA-4680) protein is Pyridoxal 5'-phosphate synthase subunit PdxS.